Consider the following 531-residue polypeptide: NAD(P)H-quinone oxidoreductase chain 4 (531 aa).

A run of 14 helical transmembrane segments spans residues 9–29 (FPWLSASILFPIGSAFVIPFF), 41–61 (FALSIALITFLITVGSYINGF), 93–113 (MPLILLTSFITALAVLAAWPV), 117–137 (PKLFFFLILVMDGGQIAVFAV), 141–161 (LLFFLTWELELIPVYLLLAIW), 173–193 (FIIYTAGSSIFILLAALAMGF), 217–237 (IFCYVGLLIAFGVKLPIVPLH), 248–268 (TAPVHMLLAGILLKMGGYALL), 282–302 (FAPLLIVLGVVNIIYAALTSF), 311–331 (IAYSSISHMGFVLIGIGSFSS), 337–357 (AMLQMVSHGLIGASLFFLVGA), 381–401 (FALWTACSLASLALPGMSGFV), 422–442 (VVMASLAAIGVILTPIYLLSM), and 469–489 (VYIIACLLLPIIGIGLYPRLV).

Belongs to the complex I subunit 4 family.

Its subcellular location is the cellular thylakoid membrane. It carries out the reaction a plastoquinone + NADH + (n+1) H(+)(in) = a plastoquinol + NAD(+) + n H(+)(out). It catalyses the reaction a plastoquinone + NADPH + (n+1) H(+)(in) = a plastoquinol + NADP(+) + n H(+)(out). Functionally, NDH-1 shuttles electrons from NAD(P)H, via FMN and iron-sulfur (Fe-S) centers, to quinones in the respiratory chain. The immediate electron acceptor for the enzyme in this species is believed to be plastoquinone. Couples the redox reaction to proton translocation (for every two electrons transferred, four hydrogen ions are translocated across the cytoplasmic membrane), and thus conserves the redox energy in a proton gradient. In Prochlorococcus marinus (strain MIT 9301), this protein is NAD(P)H-quinone oxidoreductase chain 4.